A 165-amino-acid polypeptide reads, in one-letter code: MAKMSLSSYMLMLAFSLFSHGILLSASKSIRNVEDDIVFNTFRMGKAFQKEDTAERSVVAPSLEGYKNDESGFMKDDDDKTTKNTGSKQNLVTHGLPLSLAVKPYLALKGPAVFPAENGVQNTESTQEKREIGDEENSAKFPIGRRDFDMLRCMLGRVYRPCWQV.

An N-terminal signal peptide occupies residues 1-21 (MAKMSLSSYMLMLAFSLFSHG). Basic and acidic residues predominate over residues 69–82 (DESGFMKDDDDKTT). The disordered stretch occupies residues 69–89 (DESGFMKDDDDKTTKNTGSKQ). Ile-143 bears the Isoleucine amide mark. Cys-153 and Cys-162 are disulfide-bonded.

This sequence belongs to the melanin-concentrating hormone family. Pro-MCH is processed differentially in the brain and in peripheral organs producing two neuropeptides; NEI and MCH. A third peptide, NGE, may also be produced. Preferential processing in neurons by prohormone convertase 2 (PC2) generates NEI. MCH is generated in neurons of the lateral hypothalmic area by several prohormone convertases including PC1/3, PC2 and PC5/6. In terms of tissue distribution, MCH is present in all regions of the brain and in neurointermediate lobe of the pituarity gland, with highest concentrations in the hypothalamus. Also expressed to a much lesser extent in stomach, lamina propria of both duodenum and colon, ovary, thymus, pancreas, adrenal gland and testis (spermatogonia, early spermatocytes and Sertoli cells). Weak expression in heart and lung. The other peptides are expressed at least in Sertoli cells, nei being also expressed in brain, stomach and proximal duodenum. In brain exclusively mature mch and nei peptides are present. In peripheral tissues a large product, encompassing the NEI and MCH domains of the precursor, is found predominantly. At low levels fully processed MCH and NEI peptides are present in gut. No expression in peripheral blood.

It is found in the secreted. Functionally, MCH inhibits ACTH secretion at the end of the light on period which corresponds to the peak of the circadian rhythm in ACTH. Inhibits also stress induced ACTH release during the light off period of the cycle. Involved as a neurotransmitter or neuromodulator in a broad array of neuronal functions. Stimulates sexual behavior when injected into the ventromedial nucleus, this effect is antagonized by NEI. In the medial preoptic area, stimulates anxiety and sexual behavior. Antagonizes inhibitory effect of melanotropin alpha on exploration behavior. Its function is as follows. NEI can influence differentiation of neuronal processes in brain neurons. Affects the content of neurofilament protein in neuritogenesis (in vitro). May also be a neuromodulatory factor. In behavioral tests, it stimulates exploration and anxiety when injected into the ventromedial nucleus. Also stimulates grooming, locomotion and rearing. May antagonize the inhibitory effect of mch on ACTH release. Reduces dopamine and dopac release in the ventromedial nucleus. The protein is Pro-MCH (Pmch) of Rattus norvegicus (Rat).